Consider the following 2442-residue polypeptide: Histone lysine acetyltransferase CREBBP (2442 aa).

Disordered stretches follow at residues 1-40 (MAENLLDGPPNPKRAKLSSPGFSANDSTDFGSLFDLENDL) and 74-168 (RGGS…PATS). Ala2 is subject to N-acetylalanine. Positions 20 to 30 (PGFSANDSTDF) are enriched in polar residues. Ser120 carries the phosphoserine modification. Over residues 125-168 (GDSSTPSLPKQAASTSGPTPPASQALNPQAQKQVGLVTSSPATS) the composition is skewed to polar residues. Arg219 is subject to Omega-N-methylarginine. Positions 226–409 (PAPAMQGATS…GKACQVAHCA (184 aa)) are interaction with SRCAP. The span at 261–272 (GGMTKMGMTGNT) shows a compositional bias: low complexity. Positions 261 to 290 (GGMTKMGMTGNTSPFGQPFSQTGGQPMGAT) are disordered. Positions 273–284 (SPFGQPFSQTGG) are enriched in polar residues. The segment at 346-432 (DPEKRKLIQQ…RHDCPVCLPL (87 aa)) adopts a TAZ-type 1 zinc-finger fold. Positions 362, 366, 379, 384, 393, 397, 403, 408, 417, 421, 426, and 429 each coordinate Zn(2+). The KIX domain maps to 586–665 (GVRKGWHEHV…KIYKIQKELE (80 aa)). Asymmetric dimethylarginine occurs at positions 600 and 624. Lys656 is subject to N6-acetyllysine. The span at 792–825 (FLPQNQFPSSSGAMSVNSVGMGQPATQAGVSQGQ) shows a compositional bias: polar residues. A disordered region spans residues 792 to 1084 (FLPQNQFPSS…STSPSQPRKK (293 aa)). Pro residues-rich tracts occupy residues 846–862 (PCPPVTQSPLHPTPPPA) and 874–887 (PTPPGMTPPQPAAP). A compositionally biased stretch (polar residues) spans 894–906 (VSSGQTPTPTPGS). 2 stretches are compositionally biased toward low complexity: residues 909 to 930 (SAAQTQSTPTVQAAAQAQVTPQ) and 938 to 957 (PSVATPQSSQQQPTPVHTQP). The span at 974–989 (PTPSSVTSAETSSQQP) shows a compositional bias: polar residues. Lys999 participates in a covalent cross-link: Glycyl lysine isopeptide (Lys-Gly) (interchain with G-Cter in SUMO1). Basic and acidic residues predominate over residues 1012-1022 (AESKGEPRSEM). An N6-acetyllysine modification is found at Lys1015. Phosphoserine is present on Ser1031. The span at 1033-1060 (VKEETDTTEQKSEPMEVEEKKPEVKVEA) shows a compositional bias: basic and acidic residues. Glycyl lysine isopeptide (Lys-Gly) (interchain with G-Cter in SUMO1) cross-links involve residues Lys1034 and Lys1057. The span at 1067 to 1080 (SANGTASQSTSPSQ) shows a compositional bias: polar residues. Position 1077 is a phosphoserine (Ser1077). The 108-residue stretch at 1086–1193 (FKPEELRQAL…EVFEQEIDPV (108 aa)) folds into the Bromo domain. Positions 1125 to 1171 (DYFDIVKNPMDLSTIKRKLDTGQYQEPWQYVDDVWLMFNNAWLYNRK) are interaction with histone. The segment at 1163-1181 (NNAWLYNRKTSRVYKFCSK) is interaction with ASF1A. Lys1217 is modified (N6-acetyllysine). Residues 1324–1701 (KFSAKRLQTT…MLVELHTQGQ (378 aa)) enclose the CBP/p300-type HAT domain. Ser1383 and Ser1387 each carry phosphoserine; by IKKA. Residues 1434-1436 (YLD) form an interaction with histone region. Residues 1435–1437 (LDS), 1447–1448 (RT), Ile1494, Arg1499, and Trp1503 each bind acetyl-CoA. A coiled-coil region spans residues 1548 to 1575 (NVLEESIKELEQEEEERKKEESTAASET). Over residues 1557–1569 (LEQEEEERKKEES) the composition is skewed to basic and acidic residues. A disordered region spans residues 1557 to 1616 (LEQEEEERKKEESTAASETPEGSQGDSKNAKKKNNKKTNKNKSSISRANKKKPSMPNVSN). Lys1584, Lys1592, Lys1593, Lys1596, and Lys1598 each carry N6-acetyllysine. The span at 1586-1596 (AKKKNNKKTNK) shows a compositional bias: basic residues. The ZZ-type zinc-finger motif lies at 1703-1751 (RFVYTCNECKHHVETRWHCTVCEDYDLCINCYNTKSHTHKMVKWGLGLD). Zn(2+) contacts are provided by Cys1708, Cys1711, Cys1721, Cys1724, Cys1730, Cys1733, His1739, and His1741. N6-acetyllysine is present on residues Lys1742 and Lys1745. At Ser1764 the chain carries Phosphoserine. Residues 1766 to 1847 (QESRRLSIQR…KCPVPFCLNI (82 aa)) form a TAZ-type 2 zinc finger. The interval 1875 to 1960 (TRNVPQQSLP…QPPPAAVEAA (86 aa)) is disordered. 2 stretches are compositionally biased toward pro residues: residues 1901–1913 (PQTPQPPAQPQPS) and 1944–1955 (PAPPPPAQPPPA). Residues Ser2064, Ser2077, and Ser2080 each carry the phosphoserine modification. Residues 2112–2421 (NQPGMQPQPG…LNTPNRSALS (310 aa)) are disordered. 4 stretches are compositionally biased toward low complexity: residues 2113–2138 (QPGMQPQPGLQSQPGMQPQPGMHQQP), 2197–2217 (QLLQHQQQQQQQQQQQQQQQQ), 2261–2280 (MGQMAAPMGQLGQMGQPGLG), and 2287–2305 (IQQALQQRILQQQQMKQQI). Composition is skewed to polar residues over residues 2315 to 2327 (SPQQHMLSGQPQA) and 2334 to 2343 (QIATSLSNQV). Pro residues predominate over residues 2349-2372 (VQSPRPQSQPPHSSPSPRIQPQPS). Ser2351 is subject to Phosphoserine. The span at 2411–2421 (QLNTPNRSALS) shows a compositional bias: polar residues.

Part of a complex composed of MSX3, CREBBP/CBP AND EP300/p300; the interaction with MSX3 decreases histone acetylation activity. Found in a complex containing NCOA2; NCOA3; IKKA; IKKB and IKBKG. Probably part of a complex with HIF1A and EP300. Interacts with phosphorylated CREB1. Interacts with the C-terminal region of CITED4. The TAZ-type 1 domain interacts with HIF1A. Interacts with SRCAP, CARM1, ELF3, MLLT7/FOXO4, N4BP2, NCOA1, NCOA3, NCOA6, PCAF, DDX5, DDX17, PELP1, PML, SMAD1, SMAD2, SMAD3, SPIB, TRERF1 and ZCCHC12. Interacts with KLF1; the interaction results in acetylation and enhancement of transcriptional activity of KLF1. Interacts with DAXX; the interaction is dependent on CBP sumoylation and results in suppression of the transcriptional activity via recruitment of HDAC2 to DAXX. Interacts with MAF. Interacts with MTDH. Interacts with MAFG; the interaction acetylates MAFG in the basic region and stimulates NFE2 transcriptional activity through increasing its DNA-binding activity. Interacts with IRF2; the interaction acetylates IRF2 and regulates its activity on the H4 promoter. Interacts (via N-terminus) with SS18L1/CREST (via C-terminus). Interacts with IRF3 (when phosphorylated); forming the dsRNA-activated factor 1 (DRAF1), a complex which activates the transcription of the type I interferon genes. Interacts with MECOM. Interacts with CITED1 (via C-terminus) Interacts with GATA1; the interaction results in acetylation and enhancement of transcriptional activity of GATA1. Interacts with FOXO1; the interaction acetylates FOXO1 and inhibits its transcriptional activity. Interacts with NPAS2, CLOCK and BMAL1. Interacts with ASF1A and ASF1B; this promotes histone acetylation. Interacts with acetylated TP53/p53 and with the acetylated histones H3 and H4. Interacts (via transactivation domain and C-terminus) with PCNA; the interaction occurs on chromatin in UV-irradiated damaged cells. Interacts with DHX9 (via N-terminus); this interaction mediates association with RNA polymerase II holoenzyme and stimulates CREB-dependent transcriptional activation. Interacts with SMAD4; negatively regulated by ZBTB7A. Forms a complex with KMT2A and CREB1. Interacts with DDX3X; this interaction may facilitate HNF4A acetylation. Interacts with MSX1; the interaction may inhibit MSX1 autoinactivation. Interacts with MSX3. Interacts with ACSS2. Methylation of the KIX domain by CARM1 blocks association with CREB. This results in the blockade of CREB signaling, and in activation of apoptotic response. In terms of processing, phosphorylated by CHUK/IKKA at Ser-1383 and Ser-1387; these phosphorylations promote cell growth by switching the binding preference of CREBBP from TP53 to NF-kappa-B. Post-translationally, sumoylation negatively regulates transcriptional activity via the recruitment of DAAX. Autoacetylation is required for binding to protein substrates, such as acetylated histones and acetylated TP53/p53. Autoacetylation is induced by glucose and fatty acids. As to expression, expressed in hypothalamus and cortex.

It localises to the cytoplasm. The protein localises to the nucleus. It carries out the reaction L-lysyl-[histone] + acetyl-CoA = N(6)-acetyl-L-lysyl-[histone] + CoA + H(+). It catalyses the reaction L-lysyl-[protein] + acetyl-CoA = N(6)-acetyl-L-lysyl-[protein] + CoA + H(+). The enzyme catalyses (S)-lactoyl-CoA + L-lysyl-[protein] = N(6)-[(S)-lactoyl]-L-lysyl-[protein] + CoA + H(+). Functionally, acetylates histones, giving a specific tag for transcriptional activation. Mediates acetylation of histone H3 at 'Lys-18' and 'Lys-27' (H3K18ac and H3K27ac, respectively). Also acetylates non-histone proteins, like DDX21, FBL, IRF2, MAFG, NCOA3, POLR1E/PAF53 and FOXO1. Binds specifically to phosphorylated CREB and enhances its transcriptional activity toward cAMP-responsive genes. Acts as a coactivator of ALX1. Acts as a circadian transcriptional coactivator which enhances the activity of the circadian transcriptional activators: NPAS2-BMAL1 and CLOCK-BMAL1 heterodimers. Acetylates PCNA; acetylation promotes removal of chromatin-bound PCNA and its degradation during nucleotide excision repair (NER). Acetylates POLR1E/PAF53, leading to decreased association of RNA polymerase I with the rDNA promoter region and coding region. Acetylates DDX21, thereby inhibiting DDX21 helicase activity. Acetylates FBL, preventing methylation of 'Gln-105' of histone H2A (H2AQ104me). In addition to protein acetyltransferase, can use different acyl-CoA substrates, such as lactoyl-CoA, and is able to mediate protein lactylation. Catalyzes lactylation of MRE11 in response to DNA damage, thereby promoting DNA double-strand breaks (DSBs) via homologous recombination (HR). Functions as a transcriptional coactivator for SMAD4 in the TGF-beta signaling pathway. The protein is Histone lysine acetyltransferase CREBBP (Crebbp) of Rattus norvegicus (Rat).